The chain runs to 667 residues: Protein-glutamine gamma-glutamyltransferase 4 (667 aa).

Residues asparagine 151, asparagine 220, and asparagine 227 are each glycosylated (N-linked (GlcNAc...) asparagine). Catalysis depends on residues cysteine 256, histidine 315, and aspartate 338. 2 residues coordinate Ca(2+): asparagine 378 and aspartate 380. Residue asparagine 408 is glycosylated (N-linked (GlcNAc...) asparagine). Residues glutamate 430 and glutamate 435 each coordinate Ca(2+). Residues 430–449 (EGSPEERKAMEKASGKRPDD) are disordered. Residues asparagine 472 and asparagine 488 are each glycosylated (N-linked (GlcNAc...) asparagine).

The protein belongs to the transglutaminase superfamily. Transglutaminase family. Homodimer. The cofactor is Ca(2+). The N-terminus is blocked. Post-translationally, probably linked to the cell membrane via a lipid-anchor, possibly a GPI-anchor. In terms of processing, N-glycosylated on 2 Asn residues by a high mannose oligosaccharide consisting of five mannose residues and a fucosylated biantennary complex glycan. As to expression, expressed in the coagulating gland, the dorsal part of the prostate and in semen (at protein level). Expressed at low levels in the lateral prostate and seminal vesicle. Not expressed in the epididymis, kidney, liver, serum, sperm plug, testes and ventral prostate.

It is found in the secreted. The protein localises to the cell membrane. It carries out the reaction L-glutaminyl-[protein] + L-lysyl-[protein] = [protein]-L-lysyl-N(6)-5-L-glutamyl-[protein] + NH4(+). Associated with the mammalian reproductive process. Plays an important role in the formation of the seminal coagulum through the cross-linking of specific proteins present in the seminal plasma. Transglutaminase is also required to stabilize the copulatory plug. The chain is Protein-glutamine gamma-glutamyltransferase 4 (Tgm4) from Rattus norvegicus (Rat).